We begin with the raw amino-acid sequence, 178 residues long: Large ribosomal subunit protein uL13m (178 aa).

The protein belongs to the universal ribosomal protein uL13 family. As to quaternary structure, component of the mitochondrial ribosome large subunit (39S) which comprises a 16S rRNA and about 50 distinct proteins.

The protein localises to the mitochondrion. The sequence is that of Large ribosomal subunit protein uL13m (mRpL13) from Drosophila melanogaster (Fruit fly).